Consider the following 360-residue polypeptide: Vignain (360 aa).

The first 20 residues, 1–20 (MQKFILLALSLALVLAITES), serve as a signal peptide directing secretion. Residues 21 to 124 (FDFHEKELES…NGTFMYEKVD (104 aa)) constitute a propeptide, activation peptide. A glycan (N-linked (GlcNAc...) asparagine) is linked at Asn115. Disulfide bonds link Cys147-Cys189, Cys181-Cys222, and Cys280-Cys332. The active site involves Cys150. Catalysis depends on residues His286 and Asn307. The disordered stretch occupies residues 341–360 (PIKKSSNNPSGIKSSPKDEL). Residues 344-353 (KSSNNPSGIK) show a composition bias toward polar residues. Residues 354 to 360 (SSPKDEL) constitute a propeptide, removed in mature form. The segment at 357 to 360 (KDEL) is prevents secretion from ER.

Belongs to the peptidase C1 family. The potential N-glycosylation site at Asn-115 is not glycosylated.

Its subcellular location is the cytoplasmic vesicle. With respect to regulation, low pH triggers activation of the protease and removal of the propeptide and the KDEL motif. Functionally, involved in programmed cell death. Shows a pronounced preference for hydrophobic residues in the P2 position and no obvious preference in the P1 position of the cleavage site. Accepts proline at the P1 and P1' positions. The sequence is that of Vignain (CYSEP) from Ricinus communis (Castor bean).